A 42-amino-acid polypeptide reads, in one-letter code: F420-non-reducing hydrogenase vhu subunit U (42 aa).

2 residues coordinate Ni(2+): U21 and C24. Residue U21 is a non-standard amino acid, selenocysteine. Residues 28–42 (VLDRVKFRIERKDED) constitute a propeptide, removed in mature form.

This sequence belongs to the [NiFe]/[NiFeSe] hydrogenase large subunit family. The F420-non-reducing hydrogenase vhu is composed of four subunits; VhuA, VhuD, VhuG and VhuU. The cofactor is Ni(2+).

The polypeptide is F420-non-reducing hydrogenase vhu subunit U (vhuU) (Methanopyrus kandleri (strain AV19 / DSM 6324 / JCM 9639 / NBRC 100938)).